Reading from the N-terminus, the 437-residue chain is Trigger factor (437 aa).

The 86-residue stretch at 161–246 folds into the PPIase FKBP-type domain; the sequence is GDRVNIDFKG…VNKVEGKALP (86 aa).

Belongs to the FKBP-type PPIase family. Tig subfamily.

Its subcellular location is the cytoplasm. It catalyses the reaction [protein]-peptidylproline (omega=180) = [protein]-peptidylproline (omega=0). Its function is as follows. Involved in protein export. Acts as a chaperone by maintaining the newly synthesized protein in an open conformation. Functions as a peptidyl-prolyl cis-trans isomerase. The chain is Trigger factor from Alcanivorax borkumensis (strain ATCC 700651 / DSM 11573 / NCIMB 13689 / SK2).